The primary structure comprises 337 residues: Inositol 2-dehydrogenase (337 aa).

The protein belongs to the Gfo/Idh/MocA family. In terms of assembly, homotetramer.

It catalyses the reaction myo-inositol + NAD(+) = scyllo-inosose + NADH + H(+). Its function is as follows. Involved in the oxidation of myo-inositol (MI) to 2-keto-myo-inositol (2KMI or 2-inosose). In Arthrobacter sp. (strain FB24), this protein is Inositol 2-dehydrogenase.